A 322-amino-acid polypeptide reads, in one-letter code: Beta-1,3-galactosyltransferase bre-5 (322 aa).

The Cytoplasmic portion of the chain corresponds to 1-16; sequence MFLCVRILKRKYHELS. A helical; Signal-anchor for type II membrane protein membrane pass occupies residues 17 to 37; the sequence is SFQKLLIFTITIFLLWVLGVV. The Lumenal portion of the chain corresponds to 38 to 322; the sequence is DKFRETSFGD…YEYSQLNGFE (285 aa). N150 is a glycosylation site (N-linked (GlcNAc...) asparagine).

It belongs to the glycosyltransferase 31 family. As to expression, expressed in the gut.

The protein resides in the golgi apparatus membrane. Its pathway is protein modification; protein glycosylation. Its function is as follows. Transfers N-acetylgalactosamine onto mannose groups of carbohydrate substrates. Required for susceptibility to pore-forming crystal toxins in conjunction with bre-1, bre-2, bre-3, and bre-4. Involved in resistance to the nematotoxic C.cinerea galectin Cgl2. This is Beta-1,3-galactosyltransferase bre-5 from Caenorhabditis elegans.